A 241-amino-acid chain; its full sequence is NAD-dependent protein deacylase (241 aa).

The region spanning 1–237 (MNFPYRNIVV…PKLVDEILAL (237 aa)) is the Deacetylase sirtuin-type domain. An NAD(+)-binding site is contributed by 13–32 (GAGISAESGIQTFRAQDGLW). Substrate is bound by residues Tyr57 and Arg60. 94 to 97 (QNID) contacts NAD(+). Catalysis depends on His112, which acts as the Proton acceptor. Zn(2+)-binding residues include Cys120 and Cys139. Residues 179–181 (GTS), 205–207 (NLE), and Ala223 contribute to the NAD(+) site.

It belongs to the sirtuin family. Class III subfamily. As to quaternary structure, monomer. Requires Zn(2+) as cofactor.

It localises to the cytoplasm. The protein resides in the host cytoplasm. The protein localises to the host cytosol. It is found in the host nucleus. The catalysed reaction is N(6)-acetyl-L-lysyl-[protein] + NAD(+) + H2O = 2''-O-acetyl-ADP-D-ribose + nicotinamide + L-lysyl-[protein]. The enzyme catalyses N(6)-succinyl-L-lysyl-[protein] + NAD(+) + H2O = 2''-O-succinyl-ADP-D-ribose + nicotinamide + L-lysyl-[protein]. Its function is as follows. NAD-dependent lysine deacetylase and desuccinylase that specifically removes acetyl and succinyl groups on target proteins. Modulates the activities of several proteins which are inactive in their acylated form. In the intracellular pathogen V.parahaemolyticus, this enzyme regulates host response during infection by induction of host histone deacetylation; it specifically causes deacetylation of histone lysine residues H3K56, H3K9, H3K18 and H4K16 which results in transcriptional repression of several host genes involved in epigenetic regulation, immune response, and autophagy. In Vibrio parahaemolyticus serotype O3:K6 (strain RIMD 2210633), this protein is NAD-dependent protein deacylase.